A 317-amino-acid chain; its full sequence is Beta-ketoacyl-[acyl-carrier-protein] synthase III (317 aa).

Catalysis depends on residues cysteine 112 and histidine 244. The segment at 245-249 (QANLR) is ACP-binding. The active site involves asparagine 274.

Belongs to the thiolase-like superfamily. FabH family. As to quaternary structure, homodimer.

It localises to the cytoplasm. It carries out the reaction malonyl-[ACP] + acetyl-CoA + H(+) = 3-oxobutanoyl-[ACP] + CO2 + CoA. It functions in the pathway lipid metabolism; fatty acid biosynthesis. In terms of biological role, catalyzes the condensation reaction of fatty acid synthesis by the addition to an acyl acceptor of two carbons from malonyl-ACP. Catalyzes the first condensation reaction which initiates fatty acid synthesis and may therefore play a role in governing the total rate of fatty acid production. Possesses both acetoacetyl-ACP synthase and acetyl transacylase activities. Its substrate specificity determines the biosynthesis of branched-chain and/or straight-chain of fatty acids. The polypeptide is Beta-ketoacyl-[acyl-carrier-protein] synthase III (Sodalis glossinidius (strain morsitans)).